The primary structure comprises 238 residues: Ethylene-responsive transcription factor ERN3 (238 aa).

Positions 24–81 (KFVGVRQRASGKWAAEIKDTSKNIRMWLGTYKTAEEAARAYDEAAFLLRGTNTRTNFS) form a DNA-binding region, AP2/ERF.

It belongs to the AP2/ERF transcription factor family. ERF subfamily. Expressed in roots, root hairs and leaves.

Its subcellular location is the nucleus. Functionally, transcription factor involved in symbiotic nodule signaling in response to rhizobial Nod factors (NFs). Binds to the GCC box (NF-responsive box) of ENOD11 promoter. May act as transcriptional repressor of NF-responsive box-containing target gene promoters in root hairs. This is Ethylene-responsive transcription factor ERN3 from Medicago truncatula (Barrel medic).